The chain runs to 37 residues: Large ribosomal subunit protein bL36 (37 aa).

It belongs to the bacterial ribosomal protein bL36 family.

In Halorhodospira halophila (strain DSM 244 / SL1) (Ectothiorhodospira halophila (strain DSM 244 / SL1)), this protein is Large ribosomal subunit protein bL36.